We begin with the raw amino-acid sequence, 236 residues long: Small ribosomal subunit protein uS3 (236 aa).

Positions 39 to 107 (IREFLTEELK…DTSLNIVEVR (69 aa)) constitute a KH type-2 domain. Residues 214 to 236 (ASERRAVEGDNQGSSSNRRRENA) are disordered.

The protein belongs to the universal ribosomal protein uS3 family. Part of the 30S ribosomal subunit. Forms a tight complex with proteins S10 and S14.

Functionally, binds the lower part of the 30S subunit head. Binds mRNA in the 70S ribosome, positioning it for translation. The sequence is that of Small ribosomal subunit protein uS3 from Brucella canis (strain ATCC 23365 / NCTC 10854 / RM-666).